The chain runs to 757 residues: Myb-related protein A (757 aa).

HTH myb-type domains follow at residues 30–81, 82–137, and 138–188; these read KKIC…QKVL, NPEL…NPEV, and KKSS…RRKV. 3 consecutive DNA-binding regions (H-T-H motif) follow at residues 58–81, 110–133, and 161–184; these read WAFIASHLQNRSDFQCQHRWQKVL, WSLIAKHLKGRIGKQCRERWHNHL, and WAEIAKLLPGRTDNSIKNHWNSTM. The interval 187 to 209 is disordered; the sequence is KVEQEGYLQDGTKSSSERTGSST. The span at 197 to 209 shows a compositional bias: polar residues; the sequence is GTKSSSERTGSST. Residues 235–300 are transcriptional activation domain; it reads IPVYQYASPE…RLSSQAGSLP (66 aa). The segment at 303–558 is negative regulatory domain; that stretch reads SGSFVMEDCV…IRRSLLGSTP (256 aa).

Component of the DREAM complex. Expressed ubiquitously.

The protein resides in the nucleus. Functionally, strong transcriptional activator; DNA-binding protein that specifically recognize the sequence 5'-YAAC[GT]G-3'. Could have a role in the proliferation and/or differentiation of neurogenic, spermatogenic and B-lymphoid cells. This is Myb-related protein A (MYBL1) from Gallus gallus (Chicken).